A 336-amino-acid chain; its full sequence is 4-hydroxy-3-methylbut-2-enyl diphosphate reductase (336 aa).

A [4Fe-4S] cluster-binding site is contributed by Cys32. The (2E)-4-hydroxy-3-methylbut-2-enyl diphosphate site is built by His61 and His94. 2 residues coordinate dimethylallyl diphosphate: His61 and His94. The isopentenyl diphosphate site is built by His61 and His94. Cys116 lines the [4Fe-4S] cluster pocket. His148 is a (2E)-4-hydroxy-3-methylbut-2-enyl diphosphate binding site. Position 148 (His148) interacts with dimethylallyl diphosphate. An isopentenyl diphosphate-binding site is contributed by His148. Glu150 acts as the Proton donor in catalysis. Thr189 provides a ligand contact to (2E)-4-hydroxy-3-methylbut-2-enyl diphosphate. Cys219 is a [4Fe-4S] cluster binding site. Residues Ser247, Ser248, Asn249, and Ser292 each coordinate (2E)-4-hydroxy-3-methylbut-2-enyl diphosphate. Dimethylallyl diphosphate contacts are provided by Ser247, Ser248, Asn249, and Ser292. Positions 247, 248, 249, and 292 each coordinate isopentenyl diphosphate.

This sequence belongs to the IspH family. [4Fe-4S] cluster is required as a cofactor.

The enzyme catalyses isopentenyl diphosphate + 2 oxidized [2Fe-2S]-[ferredoxin] + H2O = (2E)-4-hydroxy-3-methylbut-2-enyl diphosphate + 2 reduced [2Fe-2S]-[ferredoxin] + 2 H(+). It carries out the reaction dimethylallyl diphosphate + 2 oxidized [2Fe-2S]-[ferredoxin] + H2O = (2E)-4-hydroxy-3-methylbut-2-enyl diphosphate + 2 reduced [2Fe-2S]-[ferredoxin] + 2 H(+). Its pathway is isoprenoid biosynthesis; dimethylallyl diphosphate biosynthesis; dimethylallyl diphosphate from (2E)-4-hydroxy-3-methylbutenyl diphosphate: step 1/1. It functions in the pathway isoprenoid biosynthesis; isopentenyl diphosphate biosynthesis via DXP pathway; isopentenyl diphosphate from 1-deoxy-D-xylulose 5-phosphate: step 6/6. In terms of biological role, catalyzes the conversion of 1-hydroxy-2-methyl-2-(E)-butenyl 4-diphosphate (HMBPP) into a mixture of isopentenyl diphosphate (IPP) and dimethylallyl diphosphate (DMAPP). Acts in the terminal step of the DOXP/MEP pathway for isoprenoid precursor biosynthesis. This Gluconobacter oxydans (strain 621H) (Gluconobacter suboxydans) protein is 4-hydroxy-3-methylbut-2-enyl diphosphate reductase.